Here is a 510-residue protein sequence, read N- to C-terminus: Putative thymidine phosphorylase (510 aa).

Belongs to the thymidine/pyrimidine-nucleoside phosphorylase family. Type 2 subfamily.

The catalysed reaction is thymidine + phosphate = 2-deoxy-alpha-D-ribose 1-phosphate + thymine. The polypeptide is Putative thymidine phosphorylase (Nitrobacter hamburgensis (strain DSM 10229 / NCIMB 13809 / X14)).